A 292-amino-acid chain; its full sequence is 4'-phosphopantetheinyl transferase 1 (292 aa).

This sequence belongs to the P-Pant transferase superfamily.

It catalyses the reaction apo-[ACP] + CoA = holo-[ACP] + adenosine 3',5'-bisphosphate + H(+). Its function is as follows. Transfers the 4'-phosphopantetheine moiety from coenzyme A to a Ser of an acyl-carrier-protein. The enzyme is able to transfer the cofactor to a broad range of enzymes with acyl- or peptidyl-carrier protein domains. Required for primary biological processes such as growth and asexual/sexual development, and activates target enzymes involved in the synthesis of metabolites such as fatty acids, nonribosomal peptides and polyketides such as the gamma-pyrones fusapyrone (FPY) and deoxyfusapyrone (dFPY). The protein is 4'-phosphopantetheinyl transferase 1 of Fusarium mangiferae (Mango malformation disease fungus).